We begin with the raw amino-acid sequence, 293 residues long: Elongation factor Ts (293 aa).

An involved in Mg(2+) ion dislocation from EF-Tu region spans residues 79–82 (TDFV).

It belongs to the EF-Ts family.

It localises to the cytoplasm. Its function is as follows. Associates with the EF-Tu.GDP complex and induces the exchange of GDP to GTP. It remains bound to the aminoacyl-tRNA.EF-Tu.GTP complex up to the GTP hydrolysis stage on the ribosome. The chain is Elongation factor Ts from Exiguobacterium sibiricum (strain DSM 17290 / CCUG 55495 / CIP 109462 / JCM 13490 / 255-15).